We begin with the raw amino-acid sequence, 114 residues long: T cell receptor beta variable 6-2 (114 aa).

The first 21 residues, 1–21 (MSLGLLCCGAFSLLWAGPVNA), serve as a signal peptide directing secretion. In terms of domain architecture, Ig-like spans 22 to 114 (GVTQTPKFRV…TSVYFCASSY (93 aa)). Cysteine 42 and cysteine 110 are joined by a disulfide. An N-linked (GlcNAc...) asparagine glycan is attached at asparagine 84.

In terms of assembly, alpha-beta TR is a heterodimer composed of an alpha and beta chain; disulfide-linked. The alpha-beta TR is associated with the transmembrane signaling CD3 coreceptor proteins to form the TR-CD3 (TcR or TCR). The assembly of alpha-beta TR heterodimers with CD3 occurs in the endoplasmic reticulum where a single alpha-beta TR heterodimer associates with one CD3D-CD3E heterodimer, one CD3G-CD3E heterodimer and one CD247 homodimer forming a stable octameric structure. CD3D-CD3E and CD3G-CD3E heterodimers preferentially associate with TR alpha and TR beta chains, respectively. The association of the CD247 homodimer is the last step of TcR assembly in the endoplasmic reticulum and is required for transport to the cell surface.

Its subcellular location is the cell membrane. Its function is as follows. V region of the variable domain of T cell receptor (TR) beta chain that participates in the antigen recognition. Alpha-beta T cell receptors are antigen specific receptors which are essential to the immune response and are present on the cell surface of T lymphocytes. Recognize peptide-major histocompatibility (MH) (pMH) complexes that are displayed by antigen presenting cells (APC), a prerequisite for efficient T cell adaptive immunity against pathogens. Binding of alpha-beta TR to pMH complex initiates TR-CD3 clustering on the cell surface and intracellular activation of LCK that phosphorylates the ITAM motifs of CD3G, CD3D, CD3E and CD247 enabling the recruitment of ZAP70. In turn ZAP70 phosphorylates LAT, which recruits numerous signaling molecules to form the LAT signalosome. The LAT signalosome propagates signal branching to three major signaling pathways, the calcium, the mitogen-activated protein kinase (MAPK) kinase and the nuclear factor NF-kappa-B (NF-kB) pathways, leading to the mobilization of transcription factors that are critical for gene expression and essential for T cell growth and differentiation. The T cell repertoire is generated in the thymus, by V-(D)-J rearrangement. This repertoire is then shaped by intrathymic selection events to generate a peripheral T cell pool of self-MH restricted, non-autoaggressive T cells. Post-thymic interaction of alpha-beta TR with the pMH complexes shapes TR structural and functional avidity. This Homo sapiens (Human) protein is T cell receptor beta variable 6-2.